A 105-amino-acid polypeptide reads, in one-letter code: MIPGEIQVAAGDIELNVGRETVSVNVANHGDRPVQVGSHYHFYEVNDALVFDREPSRGFRLDIPAGTAVRFEPGQARTVQLVAYAGKREVYGFQGKVMGALEGKA.

Belongs to the urease beta subunit family. Heterotrimer of UreA (gamma), UreB (beta) and UreC (alpha) subunits. Three heterotrimers associate to form the active enzyme.

Its subcellular location is the cytoplasm. The enzyme catalyses urea + 2 H2O + H(+) = hydrogencarbonate + 2 NH4(+). It participates in nitrogen metabolism; urea degradation; CO(2) and NH(3) from urea (urease route): step 1/1. In Pseudomonas putida (strain W619), this protein is Urease subunit beta.